Consider the following 339-residue polypeptide: Uroporphyrinogen decarboxylase (339 aa).

Residues 21-25 (RQAGR), Asp-71, Tyr-147, Ser-202, and His-315 each bind substrate.

Belongs to the uroporphyrinogen decarboxylase family. Homodimer.

It is found in the cytoplasm. It carries out the reaction uroporphyrinogen III + 4 H(+) = coproporphyrinogen III + 4 CO2. Its pathway is porphyrin-containing compound metabolism; protoporphyrin-IX biosynthesis; coproporphyrinogen-III from 5-aminolevulinate: step 4/4. Functionally, catalyzes the decarboxylation of four acetate groups of uroporphyrinogen-III to yield coproporphyrinogen-III. This chain is Uroporphyrinogen decarboxylase, found in Helicobacter acinonychis (strain Sheeba).